Consider the following 312-residue polypeptide: Calcium-independent mitochondrial carrier protein SCaMC-3L (312 aa).

Solcar repeat units follow at residues 27 to 113 (GTLW…SKNF), 121 to 206 (QLFQ…LQCL), and 217 to 304 (PSGL…MKKT). Helical transmembrane passes span 33–50 (LLSG…TAPL), 88–107 (GNGI…FSVC), 131–144 (SLAV…INPM), 182–200 (YLPN…LAVY), 219–243 (GLVS…LTLV), and 279–298 (GMTP…YLVY).

It belongs to the mitochondrial carrier (TC 2.A.29) family. In terms of tissue distribution, mainly expressed in testis and at lesser levels in brain.

It is found in the mitochondrion inner membrane. It catalyses the reaction Mg(2+)(out) + phosphate(in) + ATP(out) = Mg(2+)(in) + phosphate(out) + ATP(in). The enzyme catalyses ADP(out) + phosphate(in) + H(+)(out) = ADP(in) + phosphate(out) + H(+)(in). Its function is as follows. Calcium-independent ATP-Mg/Pi exchanger that catalyzes the electroneutral exchange of Mg-ATP or free ADP against an hydrogenphosphate and participates in the net transport of adenine nucleotides across the mitochondria inner membrane. This Mus musculus (Mouse) protein is Calcium-independent mitochondrial carrier protein SCaMC-3L.